The following is a 208-amino-acid chain: Thymidylate kinase (208 aa).

10-17 (GPEGSGKS) is a binding site for ATP.

Belongs to the thymidylate kinase family.

The enzyme catalyses dTMP + ATP = dTDP + ADP. Its function is as follows. Phosphorylation of dTMP to form dTDP in both de novo and salvage pathways of dTTP synthesis. The protein is Thymidylate kinase of Bacillus cytotoxicus (strain DSM 22905 / CIP 110041 / 391-98 / NVH 391-98).